A 629-amino-acid polypeptide reads, in one-letter code: tRNA uridine 5-carboxymethylaminomethyl modification enzyme MnmG (629 aa).

FAD is bound by residues 13-18 (GGGHAG), Val125, and Ser180. An NAD(+)-binding site is contributed by 273–287 (GPRYCPSIEDKVMRF). Gln370 is an FAD binding site.

It belongs to the MnmG family. As to quaternary structure, homodimer. Heterotetramer of two MnmE and two MnmG subunits. It depends on FAD as a cofactor.

The protein localises to the cytoplasm. Its function is as follows. NAD-binding protein involved in the addition of a carboxymethylaminomethyl (cmnm) group at the wobble position (U34) of certain tRNAs, forming tRNA-cmnm(5)s(2)U34. The polypeptide is tRNA uridine 5-carboxymethylaminomethyl modification enzyme MnmG (Salmonella paratyphi C (strain RKS4594)).